We begin with the raw amino-acid sequence, 132 residues long: L-ectoine synthase (132 aa).

Belongs to the ectoine synthase family.

The enzyme catalyses (2S)-4-acetamido-2-aminobutanoate = L-ectoine + H2O. Its pathway is amine and polyamine biosynthesis; ectoine biosynthesis; L-ectoine from L-aspartate 4-semialdehyde: step 3/3. Its function is as follows. Catalyzes the circularization of gamma-N-acetyl-alpha,gamma-diaminobutyric acid (ADABA) to ectoine (1,4,5,6-tetrahydro-2-methyl-4-pyrimidine carboxylic acid), which is an excellent osmoprotectant. The polypeptide is L-ectoine synthase (Rhodococcus erythropolis (strain PR4 / NBRC 100887)).